A 247-amino-acid polypeptide reads, in one-letter code: tRNA uridine(34) hydroxylase (247 aa).

One can recognise a Rhodanese domain in the interval 124 to 218 (TKQNVILIDT…YLEDTHNKNN (95 aa)). Cys178 serves as the catalytic Cysteine persulfide intermediate.

This sequence belongs to the TrhO family.

The enzyme catalyses uridine(34) in tRNA + AH2 + O2 = 5-hydroxyuridine(34) in tRNA + A + H2O. Functionally, catalyzes oxygen-dependent 5-hydroxyuridine (ho5U) modification at position 34 in tRNAs. This is tRNA uridine(34) hydroxylase from Rickettsia prowazekii (strain Madrid E).